A 438-amino-acid chain; its full sequence is uncharacterized protein (438 aa).

The first 32 residues, 1 to 32 (MARPLLGKTSSVRRRLESLSACSIFFFLRKFC), serve as a signal peptide directing secretion.

This is an uncharacterized protein from Frog virus 3 (isolate Goorha) (FV-3).